The following is a 379-amino-acid chain: Glucose-1-phosphate adenylyltransferase (379 aa).

Alpha-D-glucose 1-phosphate is bound by residues glycine 164, 179–180 (EK), and serine 190.

The protein belongs to the bacterial/plant glucose-1-phosphate adenylyltransferase family. As to quaternary structure, homotetramer.

The catalysed reaction is alpha-D-glucose 1-phosphate + ATP + H(+) = ADP-alpha-D-glucose + diphosphate. It functions in the pathway glycan biosynthesis; glycogen biosynthesis. Functionally, involved in the biosynthesis of ADP-glucose, a building block required for the elongation reactions to produce glycogen. Catalyzes the reaction between ATP and alpha-D-glucose 1-phosphate (G1P) to produce pyrophosphate and ADP-Glc. The protein is Glucose-1-phosphate adenylyltransferase of Streptococcus uberis (strain ATCC BAA-854 / 0140J).